A 936-amino-acid polypeptide reads, in one-letter code: MEEYFNKTGYLFSGNAVFVEELYRQYLANPNSVDQTWQEFFADIKDNNVVLNKSTAKVISTNVTNKELLNNNLSSETLNNLKAKEMISAYRRNAHYLANLDPLGLEIRKTKNDLKLNIEAFGLDSSQLGENINIMDEFIGTWNCKLSELVTKLDKVYTSSIGVEFDQIENVEEKNWLYTKLETDITFTSEEKKSILNDLVEVECFEQFLHIKFPGAKRFSIEGGDASIVAMNKAIDLSMHQGVEEIVIGMAHRGRLNTLTKVVGKPYKEVIASFINGNIFPDGLNVSGDVKYHLGYSADRVRANQKIHLSLADNPSHLEAINSIVAGKVRAKQDIFVDTKRSKIKAILVHGDAAFCGQGVVAESLSMSPLTAYNVGGILHFVINNQLGFTANAADTRASRYSTEFAKIISAPILHVNGDDIEAVLKATDIAVEYRQKFSKDVVVEIICYRKYGHNEGDEPMYTQSKMYNIIKSKPTPGSIYANELVKNGIIDNNYYAKLKEKFKIRLDQEYEQAKSYKQETHFFEGYWKGISRIRGKDAITGVNKKILQDLGTKLCEIPKDFAINPKLIRLFEVRKTTLTTDQPIDWATAEQLAFAHLLCSGINIRLTGQDSARGTFSHRHSILHNQIDDTTYIPLNNLSKTQAKYEVANSNLSEYAALGFEYGYSLANPKNLVLWEAQFGDFANGAQIIFDQFISSSATKWLRMSGLVVLLPHAFEGQGPEHSSARLERFLQLAAEENMYITYPTTPASIFHLLRRQILESTRKPLIVMSPKSLLRHKYAVSKLDELGENTTFIPILDEVTKIDTNNVTKVILCSGKVYYDLFAMRTNNSNIVIIRLEQLYPFEKKLVASLLKKYNKAQAFIWCQEEPKNMGAWHYIATHLNDALKEAEINNEFKYVGREESASPAVGSLQVHNKQQEKLLMEALGDDIIKEKLY.

The protein belongs to the alpha-ketoglutarate dehydrogenase family. Homodimer. Part of the 2-oxoglutarate dehydrogenase (OGDH) complex composed of E1 (2-oxoglutarate dehydrogenase), E2 (dihydrolipoamide succinyltransferase) and E3 (dihydrolipoamide dehydrogenase); the complex contains multiple copies of the three enzymatic components (E1, E2 and E3). The cofactor is thiamine diphosphate.

The enzyme catalyses N(6)-[(R)-lipoyl]-L-lysyl-[protein] + 2-oxoglutarate + H(+) = N(6)-[(R)-S(8)-succinyldihydrolipoyl]-L-lysyl-[protein] + CO2. Its function is as follows. E1 component of the 2-oxoglutarate dehydrogenase (OGDH) complex which catalyzes the decarboxylation of 2-oxoglutarate, the first step in the conversion of 2-oxoglutarate to succinyl-CoA and CO(2). This is 2-oxoglutarate dehydrogenase E1 component (sucA) from Rickettsia prowazekii (strain Madrid E).